Consider the following 143-residue polypeptide: 3-hydroxyacyl-[acyl-carrier-protein] dehydratase FabZ (143 aa).

The active site involves H49.

Belongs to the thioester dehydratase family. FabZ subfamily.

The protein localises to the cytoplasm. It carries out the reaction a (3R)-hydroxyacyl-[ACP] = a (2E)-enoyl-[ACP] + H2O. Involved in unsaturated fatty acids biosynthesis. Catalyzes the dehydration of short chain beta-hydroxyacyl-ACPs and long chain saturated and unsaturated beta-hydroxyacyl-ACPs. The sequence is that of 3-hydroxyacyl-[acyl-carrier-protein] dehydratase FabZ from Wolbachia pipientis subsp. Culex pipiens (strain wPip).